Reading from the N-terminus, the 290-residue chain is Acetyl-coenzyme A carboxylase carboxyl transferase subunit beta (290 aa).

The 263-residue stretch at 28–290 (IMTKCPKCKK…TGGDIEWLQD (263 aa)) folds into the CoA carboxyltransferase N-terminal domain. Positions 32, 35, 51, and 54 each coordinate Zn(2+). Residues 32-54 (CPKCKKIMLTKELDKNMRVCMNC) form a C4-type zinc finger.

Belongs to the AccD/PCCB family. Acetyl-CoA carboxylase is a heterohexamer composed of biotin carboxyl carrier protein (AccB), biotin carboxylase (AccC) and two subunits each of ACCase subunit alpha (AccA) and ACCase subunit beta (AccD). Zn(2+) serves as cofactor.

The protein resides in the cytoplasm. It catalyses the reaction N(6)-carboxybiotinyl-L-lysyl-[protein] + acetyl-CoA = N(6)-biotinyl-L-lysyl-[protein] + malonyl-CoA. Its pathway is lipid metabolism; malonyl-CoA biosynthesis; malonyl-CoA from acetyl-CoA: step 1/1. Inhibited by pyrrolidine dione antibiotics moiramide B (CPD1) and CPD2. Functionally, component of the acetyl coenzyme A carboxylase (ACC) complex. Biotin carboxylase (BC) catalyzes the carboxylation of biotin on its carrier protein (BCCP) and then the CO(2) group is transferred by the transcarboxylase to acetyl-CoA to form malonyl-CoA. The sequence is that of Acetyl-coenzyme A carboxylase carboxyl transferase subunit beta from Bacillus subtilis (strain 168).